The sequence spans 235 residues: MKKGEMIYQGKAKKVYETDDKDKVIIYYKDDATAFNGEKKGQITDKGILNNNITSSLFELLEKNNIPTHFEKKLNDREQLCKKVDIIPLEVIVRNVAAGSMAKRLGLEEGTPLKTTVFELSYKDDSLGDPIINDYHAVAIGIATWDELKTIYDMTASINDILELFFRKLGIKLIDFKLEFGKFKDKIVLADEISPDTCRLWDAVTNEKLDKDRFRRDMGNVKEAYEEILRRISDN.

Belongs to the SAICAR synthetase family.

It catalyses the reaction 5-amino-1-(5-phospho-D-ribosyl)imidazole-4-carboxylate + L-aspartate + ATP = (2S)-2-[5-amino-1-(5-phospho-beta-D-ribosyl)imidazole-4-carboxamido]succinate + ADP + phosphate + 2 H(+). It functions in the pathway purine metabolism; IMP biosynthesis via de novo pathway; 5-amino-1-(5-phospho-D-ribosyl)imidazole-4-carboxamide from 5-amino-1-(5-phospho-D-ribosyl)imidazole-4-carboxylate: step 1/2. The chain is Phosphoribosylaminoimidazole-succinocarboxamide synthase from Clostridium kluyveri (strain NBRC 12016).